Reading from the N-terminus, the 345-residue chain is 3'-5' exoribonuclease 1 (345 aa).

2 stretches are compositionally biased toward basic and acidic residues: residues 1–11 (MEDERGRERGG) and 19–46 (PRPECEESRPLSVEKKQRCRLDGKETDG). Residues 1–50 (MEDERGRERGGDAAQQKTPRPECEESRPLSVEKKQRCRLDGKETDGSKFI) form a disordered region. Residues Ser-55 and Ser-58 each carry the phosphoserine modification. In terms of domain architecture, SAP spans 72-106 (INRMSKEELRAKLSEFKLETRGVKDVLKKRLKNYY). Positions 126-302 (ICIIDFEATC…DDSKNIARIA (177 aa)) constitute an Exonuclease domain. Mg(2+)-binding residues include Asp-130 and Glu-132. Catalysis depends on Glu-132, which acts as the Proton acceptor. Residues Glu-132 and Ala-133 each contribute to the AMP site. Asp-230 serves as a coordination point for Mg(2+). The active-site Proton acceptor is the His-289. His-289 provides a ligand contact to AMP. Asp-294 serves as a coordination point for Mg(2+).

In terms of assembly, identified in a histone pre-mRNA complex, at least composed of ERI1, LSM11, SLBP, SNRPB, SYNCRIP and YBX1. Binds to 40S and 60S ribosomal subunits and to 80S assembled ribosomes. Interacts in a cooperative manner with SLBP to the mature 3'-end of histone mRNAs. Found in a ternary complex with SLBP and the stem-loop structure of the 3'-end of histone mRNAs. Mg(2+) serves as cofactor. As to expression, widely expressed with high levels in spleen, thymus and testis (at protein level).

The protein resides in the cytoplasm. Its subcellular location is the nucleus. It is found in the nucleolus. It catalyses the reaction Exonucleolytic cleavage in the 3'- to 5'-direction to yield nucleoside 5'-phosphates.. Its activity is regulated as follows. Although it can bind simultaneously with SLBP to the 3'-end of histone mRNA, the presence of SLBP prevents the exonuclease activity. Functionally, RNA exonuclease that binds to the 3'-end of histone mRNAs and degrades them, suggesting that it plays an essential role in histone mRNA decay after replication. A 2' and 3'-hydroxyl groups at the last nucleotide of the histone 3'-end is required for efficient 3'-end histone mRNA exonuclease activity and degradation of RNA substrates. Also able to degrade the 3'-overhangs of short interfering RNAs (siRNAs) in vitro, suggesting a possible role as regulator of RNA interference (RNAi). Required for binding the 5'-ACCCA-3' sequence present in stem-loop structure. Able to bind other mRNAs. Required for 5.8S rRNA 3'-end processing. Also binds to 5.8s ribosomal RNA. Binds with high affinity to the stem-loop structure of replication-dependent histone pre-mRNAs. In vitro, does not have sequence specificity. In vitro, has weak DNA exonuclease activity. In vitro, shows biphasic kinetics such that there is rapid hydrolysis of the last three unpaired RNA nucleotides in the 39 flanking sequence followed by a much slower cleavage through the stem that occurs over a longer incubation period in the order of hours. ERI1-mediated RNA metabolism plays a key role in chondrogenesis. This is 3'-5' exoribonuclease 1 (Eri1) from Mus musculus (Mouse).